Reading from the N-terminus, the 517-residue chain is Succinyl-CoA:3-ketoacid coenzyme A transferase 2, mitochondrial (517 aa).

The transit peptide at 1–39 (MAALRLLASVLGRGVPAGGSGLALSQGCARCFATSPRLR) directs the protein to the mitochondrion. The active-site 5-glutamyl coenzyme A thioester intermediate is E341.

This sequence belongs to the 3-oxoacid CoA-transferase family. In terms of assembly, homodimer. Testis specific.

It is found in the mitochondrion. It carries out the reaction a 3-oxo acid + succinyl-CoA = a 3-oxoacyl-CoA + succinate. The protein operates within ketone metabolism; succinyl-CoA degradation; acetoacetyl-CoA from succinyl-CoA: step 1/1. In terms of biological role, key enzyme for ketone body catabolism. Transfers the CoA moiety from succinate to acetoacetate. Formation of the enzyme-CoA intermediate proceeds via an unstable anhydride species formed between the carboxylate groups of the enzyme and substrate. The chain is Succinyl-CoA:3-ketoacid coenzyme A transferase 2, mitochondrial (OXCT2) from Homo sapiens (Human).